The sequence spans 101 residues: NADH-quinone oxidoreductase subunit K (101 aa).

3 helical membrane passes run 4 to 24 (LAHFLVLGAILFAISIVGIFL), 30 to 50 (IVLLMAIELMLLAVNMNFVAF), and 61 to 81 (VFVFFILTVAAAESAIGLAIL).

Belongs to the complex I subunit 4L family. In terms of assembly, NDH-1 is composed of 14 different subunits. Subunits NuoA, H, J, K, L, M, N constitute the membrane sector of the complex.

Its subcellular location is the cell inner membrane. The enzyme catalyses a quinone + NADH + 5 H(+)(in) = a quinol + NAD(+) + 4 H(+)(out). Functionally, NDH-1 shuttles electrons from NADH, via FMN and iron-sulfur (Fe-S) centers, to quinones in the respiratory chain. The immediate electron acceptor for the enzyme in this species is believed to be ubiquinone. Couples the redox reaction to proton translocation (for every two electrons transferred, four hydrogen ions are translocated across the cytoplasmic membrane), and thus conserves the redox energy in a proton gradient. The polypeptide is NADH-quinone oxidoreductase subunit K (Cupriavidus pinatubonensis (strain JMP 134 / LMG 1197) (Cupriavidus necator (strain JMP 134))).